The sequence spans 64 residues: uncharacterized protein (64 aa).

Residues 1-64 form a disordered region; sequence MNNPNIVPPH…QNQPPQRPQY (64 aa). Low complexity predominate over residues 8–32; the sequence is PPHFNQHQQQNHNQNQPPHHMNNPN.

This is an uncharacterized protein from Dictyostelium discoideum (Social amoeba).